A 303-amino-acid chain; its full sequence is N-acetyl-D-glucosamine kinase (303 aa).

ATP-binding positions include 4 to 11 and 133 to 140; these read GFDIGGTK and GVGGGLVL. The Zn(2+) site is built by His157, Cys177, Cys179, and Cys184.

It belongs to the ROK (NagC/XylR) family. NagK subfamily.

It carries out the reaction N-acetyl-D-glucosamine + ATP = N-acetyl-D-glucosamine 6-phosphate + ADP + H(+). It participates in cell wall biogenesis; peptidoglycan recycling. In terms of biological role, catalyzes the phosphorylation of N-acetyl-D-glucosamine (GlcNAc) derived from cell-wall degradation, yielding GlcNAc-6-P. The chain is N-acetyl-D-glucosamine kinase from Salmonella arizonae (strain ATCC BAA-731 / CDC346-86 / RSK2980).